Reading from the N-terminus, the 650-residue chain is Acetyl-coenzyme A synthetase (650 aa).

CoA contacts are provided by residues 191 to 194 (RGGR), Thr311, and Asn335. ATP is bound by residues 387 to 389 (GEP), 411 to 416 (DTWWQT), Asp500, and Arg515. Ser523 contacts CoA. Arg526 is a binding site for ATP. Positions 537, 539, and 542 each coordinate Mg(2+). Arg584 contacts CoA. N6-acetyllysine is present on Lys609.

The protein belongs to the ATP-dependent AMP-binding enzyme family. Requires Mg(2+) as cofactor. Acetylated. Deacetylation by the SIR2-homolog deacetylase activates the enzyme.

It catalyses the reaction acetate + ATP + CoA = acetyl-CoA + AMP + diphosphate. Catalyzes the conversion of acetate into acetyl-CoA (AcCoA), an essential intermediate at the junction of anabolic and catabolic pathways. AcsA undergoes a two-step reaction. In the first half reaction, AcsA combines acetate with ATP to form acetyl-adenylate (AcAMP) intermediate. In the second half reaction, it can then transfer the acetyl group from AcAMP to the sulfhydryl group of CoA, forming the product AcCoA. The chain is Acetyl-coenzyme A synthetase from Shewanella frigidimarina (strain NCIMB 400).